Consider the following 342-residue polypeptide: Ferredoxin--NADP reductase (342 aa).

Residues Cys-17, Asp-36, Gln-44, Tyr-49, Val-89, Phe-124, Asp-289, and Thr-330 each contribute to the FAD site.

Belongs to the ferredoxin--NADP reductase type 2 family. Homodimer. The cofactor is FAD.

The enzyme catalyses 2 reduced [2Fe-2S]-[ferredoxin] + NADP(+) + H(+) = 2 oxidized [2Fe-2S]-[ferredoxin] + NADPH. In Bradyrhizobium sp. (strain BTAi1 / ATCC BAA-1182), this protein is Ferredoxin--NADP reductase.